Here is a 95-residue protein sequence, read N- to C-terminus: MSVTRDDVRKVARLSRIAVPEERLDELAGELNGILGWIDQLNEVDVEGVEPMTSVVETKLPMRDDVVTDGNIQDQVLANAPRSEHGFFVVPKAVE.

The protein belongs to the GatC family. In terms of assembly, heterotrimer of A, B and C subunits.

It carries out the reaction L-glutamyl-tRNA(Gln) + L-glutamine + ATP + H2O = L-glutaminyl-tRNA(Gln) + L-glutamate + ADP + phosphate + H(+). It catalyses the reaction L-aspartyl-tRNA(Asn) + L-glutamine + ATP + H2O = L-asparaginyl-tRNA(Asn) + L-glutamate + ADP + phosphate + 2 H(+). Its function is as follows. Allows the formation of correctly charged Asn-tRNA(Asn) or Gln-tRNA(Gln) through the transamidation of misacylated Asp-tRNA(Asn) or Glu-tRNA(Gln) in organisms which lack either or both of asparaginyl-tRNA or glutaminyl-tRNA synthetases. The reaction takes place in the presence of glutamine and ATP through an activated phospho-Asp-tRNA(Asn) or phospho-Glu-tRNA(Gln). The polypeptide is Aspartyl/glutamyl-tRNA(Asn/Gln) amidotransferase subunit C (Hyphomonas neptunium (strain ATCC 15444)).